The primary structure comprises 93 residues: Exodeoxyribonuclease 7 small subunit (93 aa).

The disordered stretch occupies residues 1-22 (MAKTASPGATPPGNGAEPLPDN).

This sequence belongs to the XseB family. In terms of assembly, heterooligomer composed of large and small subunits.

It is found in the cytoplasm. It catalyses the reaction Exonucleolytic cleavage in either 5'- to 3'- or 3'- to 5'-direction to yield nucleoside 5'-phosphates.. Its function is as follows. Bidirectionally degrades single-stranded DNA into large acid-insoluble oligonucleotides, which are then degraded further into small acid-soluble oligonucleotides. The protein is Exodeoxyribonuclease 7 small subunit of Burkholderia multivorans (strain ATCC 17616 / 249).